The following is a 133-amino-acid chain: Ribosome-binding factor A (133 aa).

The protein belongs to the RbfA family. Monomer. Binds 30S ribosomal subunits, but not 50S ribosomal subunits or 70S ribosomes.

Its subcellular location is the cytoplasm. Functionally, one of several proteins that assist in the late maturation steps of the functional core of the 30S ribosomal subunit. Associates with free 30S ribosomal subunits (but not with 30S subunits that are part of 70S ribosomes or polysomes). Required for efficient processing of 16S rRNA. May interact with the 5'-terminal helix region of 16S rRNA. In Salmonella typhimurium (strain LT2 / SGSC1412 / ATCC 700720), this protein is Ribosome-binding factor A.